Here is a 165-residue protein sequence, read N- to C-terminus: 3-isopropylmalate dehydratase small subunit (165 aa).

It belongs to the LeuD family. LeuD type 2 subfamily. Heterodimer of LeuC and LeuD.

The catalysed reaction is (2R,3S)-3-isopropylmalate = (2S)-2-isopropylmalate. It functions in the pathway amino-acid biosynthesis; L-leucine biosynthesis; L-leucine from 3-methyl-2-oxobutanoate: step 2/4. Its function is as follows. Catalyzes the isomerization between 2-isopropylmalate and 3-isopropylmalate, via the formation of 2-isopropylmaleate. This Saccharolobus islandicus (strain M.14.25 / Kamchatka #1) (Sulfolobus islandicus) protein is 3-isopropylmalate dehydratase small subunit.